Here is a 65-residue protein sequence, read N- to C-terminus: Large ribosomal subunit protein bL35 (65 aa).

It belongs to the bacterial ribosomal protein bL35 family.

This is Large ribosomal subunit protein bL35 from Thermotoga maritima (strain ATCC 43589 / DSM 3109 / JCM 10099 / NBRC 100826 / MSB8).